Here is a 198-residue protein sequence, read N- to C-terminus: Protein GrpE (198 aa).

The disordered stretch occupies residues 1-58 (MTEKDQSVNNEEFAEKEDNTAKDSNTDEQIEKTASEDDVQNDSSAVDDKEKEIQQLKE). Composition is skewed to basic and acidic residues over residues 16–35 (KEDN…KTAS) and 46–58 (VDDK…QLKE).

Belongs to the GrpE family. In terms of assembly, homodimer.

The protein localises to the cytoplasm. Functionally, participates actively in the response to hyperosmotic and heat shock by preventing the aggregation of stress-denatured proteins, in association with DnaK and GrpE. It is the nucleotide exchange factor for DnaK and may function as a thermosensor. Unfolded proteins bind initially to DnaJ; upon interaction with the DnaJ-bound protein, DnaK hydrolyzes its bound ATP, resulting in the formation of a stable complex. GrpE releases ADP from DnaK; ATP binding to DnaK triggers the release of the substrate protein, thus completing the reaction cycle. Several rounds of ATP-dependent interactions between DnaJ, DnaK and GrpE are required for fully efficient folding. The chain is Protein GrpE from Staphylococcus carnosus (strain TM300).